A 784-amino-acid polypeptide reads, in one-letter code: E3 UFM1-protein ligase 1 homolog (784 aa).

The segment at 405–480 (SVSTQELEDD…RGGGAGNKKA (76 aa)) is disordered. Residues 444 to 454 (KSTKKHQRGKA) show a composition bias toward basic residues.

Belongs to the UFL1 family.

Its function is as follows. E3 UFM1-protein ligase that mediates ufmylation of target proteins. The chain is E3 UFM1-protein ligase 1 homolog from Drosophila yakuba (Fruit fly).